A 333-amino-acid polypeptide reads, in one-letter code: Ribosomal RNA small subunit methyltransferase H (333 aa).

Residues 42–44 (GGH), D62, F86, D105, and Q112 contribute to the S-adenosyl-L-methionine site.

The protein belongs to the methyltransferase superfamily. RsmH family.

It is found in the cytoplasm. The catalysed reaction is cytidine(1402) in 16S rRNA + S-adenosyl-L-methionine = N(4)-methylcytidine(1402) in 16S rRNA + S-adenosyl-L-homocysteine + H(+). Specifically methylates the N4 position of cytidine in position 1402 (C1402) of 16S rRNA. The polypeptide is Ribosomal RNA small subunit methyltransferase H (Cupriavidus necator (strain ATCC 17699 / DSM 428 / KCTC 22496 / NCIMB 10442 / H16 / Stanier 337) (Ralstonia eutropha)).